The chain runs to 307 residues: Acyl transferase (307 aa).

Residues S116, D213, and H243 each act as charge relay system in the active site.

The protein belongs to the LuxD family.

Its pathway is lipid metabolism; fatty acid reduction for biolumincescence. Functionally, acyl transferase is part of the fatty acid reductase system required for aldehyde biosynthesis; it produces fatty acids for the luminescent reaction. This is Acyl transferase from Aliivibrio fischeri (strain ATCC 700601 / ES114) (Vibrio fischeri).